We begin with the raw amino-acid sequence, 77 residues long: MSRVCQVTGKGPVTGNNISHANNKTRRRFLPNLQHHRFWVEGEKRFVRLRVSAKGMRIIDKRGIEVVLAELRRDGKI.

The interval 1–20 (MSRVCQVTGKGPVTGNNISH) is disordered.

It belongs to the bacterial ribosomal protein bL28 family.

This is Large ribosomal subunit protein bL28 from Pseudomonas syringae pv. tomato (strain ATCC BAA-871 / DC3000).